A 365-amino-acid polypeptide reads, in one-letter code: Probable G-protein coupled receptor 142 (365 aa).

Over 1–66 (MHLNSNPNSY…WPESPERSPC (66 aa)) the chain is Extracellular. Asn44 carries N-linked (GlcNAc...) asparagine glycosylation. A helical membrane pass occupies residues 67–87 (VAGIIPVIYYSVLLSLGLPVA). Residues 88–102 (LARLAARTRKPSYHY) lie on the Cytoplasmic side of the membrane. A helical transmembrane segment spans residues 103–123 (LLALTASDIVTQVIIVFVGFL). The Extracellular segment spans residues 124–140 (LQGAVLARQVPQAVVRT). Residues 141 to 161 (ANILEFAANHASVWIAVLFTV) traverse the membrane as a helical segment. The Cytoplasmic segment spans residues 162–185 (DRYNALCRPLRHRATSSPGRTHRA). Residues 186-206 (IAAVIGVTLLTGIPFYWWLDV) traverse the membrane as a helical segment. Over 207–224 (WRDADPPSTMDKLLKWAH) the chain is Extracellular. Residues 225–245 (CLIVYFIPCNVFLVTNSAIIL) form a helical membrane-spanning segment. Residues 246–264 (RLRKRGQRGLRPLVSKSTA) lie on the Cytoplasmic side of the membrane. Residues 265–285 (ILLGVTSLFALLWAPRIIVML) traverse the membrane as a helical segment. Residues 286-304 (YHLYVAPVHRDWRVHLALD) lie on the Extracellular side of the membrane. Residues 305–325 (IANMLAMLNTEVNFGLYCFIS) traverse the membrane as a helical segment. Over 326–365 (KTFRATVRQVICDVHMACALKSQPKQTVVELMLKSVGTEL) the chain is Cytoplasmic.

It belongs to the G-protein coupled receptor 1 family.

The protein localises to the cell membrane. In terms of biological role, orphan receptor. The sequence is that of Probable G-protein coupled receptor 142 (Gpr142) from Mus musculus (Mouse).